Reading from the N-terminus, the 523-residue chain is MSLTPNHRPVLVVDYGAQYAQLIARRVREAGIYSEVIPHTATPQEIQEKNPVALVLSGGPSSVYAEDAPGIDPDILKLGLPVFGICYGFQAMTHALGGKVAATGKREYGRTDLEVKGGVLHDGLELSHKVWMSHGDAVSEAPEGFTVTASSEAAPVAAFENVEAKMAGVQYHPEVLHSPHGQQVLTRFLTEIAGLEQNWTAANIAEELVEKIREQVGPEGRAICGLSGGVDSAVAAALVQRAIGDRLTCVFVDHGLLRAGEREQVEKDFVAATGAKLVTVDERKAFLDKLAGVTEPEAKRKAIGAEFIRSFERAVAGVLEDSPEGSTVDFLVQGTLYPDVVESGGGAGTANIKSHHNVGGLPDDVEFELVEPLRLLFKDEVRAVGRELGLPEVIVARQPFPGPGLGIRIIGEVTEERLETLRHADLIARTELTAAGLDGIIWQCPVVLLADVRSVGVQGDGRTYGHPIVLRPVSSEDAMTADWTRLPYEVLERISTRITNEVADVNRVVLDVTSKPPGTIEWE.

In terms of domain architecture, Glutamine amidotransferase type-1 spans 9 to 198; sequence PVLVVDYGAQ…LTEIAGLEQN (190 aa). The Nucleophile role is filled by Cys-86. Active-site residues include His-172 and Glu-174. The GMPS ATP-PPase domain occupies 199-397; sequence WTAANIAEEL…LGLPEVIVAR (199 aa). 227–233 is a binding site for ATP; that stretch reads SGGVDSA.

In terms of assembly, homodimer.

The enzyme catalyses XMP + L-glutamine + ATP + H2O = GMP + L-glutamate + AMP + diphosphate + 2 H(+). The protein operates within purine metabolism; GMP biosynthesis; GMP from XMP (L-Gln route): step 1/1. Functionally, catalyzes the synthesis of GMP from XMP. The polypeptide is GMP synthase [glutamine-hydrolyzing] (Corynebacterium efficiens (strain DSM 44549 / YS-314 / AJ 12310 / JCM 11189 / NBRC 100395)).